Consider the following 170-residue polypeptide: Myosin regulatory light chain 1 (170 aa).

Over residues 1 to 13 (MSKAAKKKSSKKR) the composition is skewed to basic residues. The disordered stretch occupies residues 1-22 (MSKAAKKKSSKKRSGSEAAQFD). EF-hand domains lie at 24–59 (KTIQ…MGQI) and 93–128 (DPEA…KRGE). Residues Asp-37, Asn-39, Asp-41, and Asp-48 each coordinate Ca(2+).

Myosin is a hexamer of 2 heavy chains and 4 light chains (two regulatory light chains and two essential light chains).

The sequence is that of Myosin regulatory light chain 1 (mlc-1) from Caenorhabditis elegans.